The chain runs to 294 residues: Diaminopimelate epimerase (294 aa).

Residues Asn11 and Asn78 each coordinate substrate. Cys87 acts as the Proton donor in catalysis. Residues 88–89 (GN), Asn167, Asn203, and 221–222 (ER) contribute to the substrate site. Cys230 acts as the Proton acceptor in catalysis. 231–232 (GT) serves as a coordination point for substrate.

Belongs to the diaminopimelate epimerase family. Homodimer.

It localises to the cytoplasm. The enzyme catalyses (2S,6S)-2,6-diaminopimelate = meso-2,6-diaminopimelate. It participates in amino-acid biosynthesis; L-lysine biosynthesis via DAP pathway; DL-2,6-diaminopimelate from LL-2,6-diaminopimelate: step 1/1. Functionally, catalyzes the stereoinversion of LL-2,6-diaminopimelate (L,L-DAP) to meso-diaminopimelate (meso-DAP), a precursor of L-lysine and an essential component of the bacterial peptidoglycan. The sequence is that of Diaminopimelate epimerase from Mycobacterium avium (strain 104).